The primary structure comprises 264 residues: Thymidylate synthase (264 aa).

R21 is a dUMP binding site. A (6R)-5,10-methylene-5,6,7,8-tetrahydrofolate-binding site is contributed by H51. 126 to 127 contributes to the dUMP binding site; the sequence is RR. C146 serves as the catalytic Nucleophile. DUMP-binding positions include 166 to 169, N177, and 207 to 209; these read RSAD and HIY. Residue D169 coordinates (6R)-5,10-methylene-5,6,7,8-tetrahydrofolate. A (6R)-5,10-methylene-5,6,7,8-tetrahydrofolate-binding site is contributed by A263.

It belongs to the thymidylate synthase family. Bacterial-type ThyA subfamily. As to quaternary structure, homodimer.

Its subcellular location is the cytoplasm. The enzyme catalyses dUMP + (6R)-5,10-methylene-5,6,7,8-tetrahydrofolate = 7,8-dihydrofolate + dTMP. The protein operates within pyrimidine metabolism; dTTP biosynthesis. Its function is as follows. Catalyzes the reductive methylation of 2'-deoxyuridine-5'-monophosphate (dUMP) to 2'-deoxythymidine-5'-monophosphate (dTMP) while utilizing 5,10-methylenetetrahydrofolate (mTHF) as the methyl donor and reductant in the reaction, yielding dihydrofolate (DHF) as a by-product. This enzymatic reaction provides an intracellular de novo source of dTMP, an essential precursor for DNA biosynthesis. The chain is Thymidylate synthase from Ruthia magnifica subsp. Calyptogena magnifica.